We begin with the raw amino-acid sequence, 250 residues long: AA9 family lytic polysaccharide monooxygenase E (250 aa).

The N-terminal stretch at 1-21 (MAMSKIMSLTGLLASASLVAG) is a signal peptide. Positions 22 and 107 each coordinate Cu(2+). Intrachain disulfides connect Cys-77-Cys-199 and Cys-118-Cys-122. N-linked (GlcNAc...) asparagine glycosylation occurs at Asn-159. O2 contacts are provided by His-185 and Gln-194. Tyr-196 contributes to the Cu(2+) binding site.

Belongs to the polysaccharide monooxygenase AA9 family. Cu(2+) serves as cofactor.

The protein localises to the secreted. The enzyme catalyses [(1-&gt;4)-beta-D-glucosyl]n+m + reduced acceptor + O2 = 4-dehydro-beta-D-glucosyl-[(1-&gt;4)-beta-D-glucosyl]n-1 + [(1-&gt;4)-beta-D-glucosyl]m + acceptor + H2O.. Its function is as follows. Lytic polysaccharide monooxygenase (LPMO) that depolymerizes crystalline and amorphous polysaccharides via the oxidation of scissile alpha- or beta-(1-4)-glycosidic bonds, yielding C1 or C4 oxidation products. Catalysis by LPMOs requires the reduction of the active-site copper from Cu(II) to Cu(I) by a reducing agent and H(2)O(2) or O(2) as a cosubstrate. This Aspergillus tamarii protein is AA9 family lytic polysaccharide monooxygenase E.